A 329-amino-acid chain; its full sequence is 2,3,4,5-tetrahydropyridine-2,6-dicarboxylate N-succinyltransferase (329 aa).

The Mg(2+) site is built by aspartate 177 and glutamate 194. Residue glutamate 210 is the Acyl-anhydride intermediate of the active site. Succinyl-CoA is bound by residues arginine 212, glycine 227, serine 230, alanine 253, 268–269 (EA), glycine 276, lysine 288, and 301–304 (RRNS).

The protein belongs to the type 2 tetrahydrodipicolinate N-succinyltransferase family. In terms of assembly, homotrimer.

The protein localises to the cytoplasm. It carries out the reaction (S)-2,3,4,5-tetrahydrodipicolinate + succinyl-CoA + H2O = (S)-2-succinylamino-6-oxoheptanedioate + CoA. It participates in amino-acid biosynthesis; L-lysine biosynthesis via DAP pathway; LL-2,6-diaminopimelate from (S)-tetrahydrodipicolinate (succinylase route): step 1/3. Its function is as follows. Catalyzes the conversion of the cyclic tetrahydrodipicolinate (THDP) into the acyclic N-succinyl-L-2-amino-6-oxopimelate using succinyl-CoA. This is 2,3,4,5-tetrahydropyridine-2,6-dicarboxylate N-succinyltransferase from Streptomyces coelicolor (strain ATCC BAA-471 / A3(2) / M145).